The sequence spans 282 residues: UDP-N-acetylenolpyruvoylglucosamine reductase (282 aa).

The FAD-binding PCMH-type domain maps to 15–179; it reads IKSFAKYVYF…LSAEFEFEYK (165 aa). Arginine 157 is a catalytic residue. The active-site Proton donor is the serine 207. Glutamate 278 is a catalytic residue.

It belongs to the MurB family. The cofactor is FAD.

The protein localises to the cytoplasm. It catalyses the reaction UDP-N-acetyl-alpha-D-muramate + NADP(+) = UDP-N-acetyl-3-O-(1-carboxyvinyl)-alpha-D-glucosamine + NADPH + H(+). Its pathway is cell wall biogenesis; peptidoglycan biosynthesis. Cell wall formation. This is UDP-N-acetylenolpyruvoylglucosamine reductase from Francisella tularensis subsp. tularensis (strain SCHU S4 / Schu 4).